The sequence spans 331 residues: High-affinity nickel-transport protein NixA (331 aa).

At 1–5 (MKLWF) the chain is on the cytoplasmic side. Residues 6–26 (PYFLAIVFLHALGLALLFMAN) traverse the membrane as a helical segment. The Periplasmic portion of the chain corresponds to 27-33 (NASFYAA). A helical membrane pass occupies residues 34–54 (ASMAYMLGAKHAFDADHIACI). Residues 55–66 (DNTIRKLTQQGK) are Cytoplasmic-facing. The helical transmembrane segment at 67–87 (NAYGVGFYFSMGHSSVVILMT) threads the bilayer. Over 88–113 (IISAFAIAWAKEHTPMLEEIGGVVGT) the chain is Periplasmic. The helical transmembrane segment at 114-135 (LVSGLFLLIIGLLNAIILLDLL) threads the bilayer. Residues 136–178 (KIFKKSHSNESLSQQQNEEIERLLTSRGLLNRFFKPLFNFVSK) lie on the Cytoplasmic side of the membrane. The helical transmembrane segment at 179 to 199 (SWHIYPIGFLFGLGFDTASEI) threads the bilayer. Over 200-225 (ALLALSSSAIKVSMVGMLSLPILFAA) the chain is Periplasmic. The chain crosses the membrane as a helical span at residues 226-246 (GMSLFDTLDGAFMLKAYDWAF). Residues 247–252 (KTPLRK) lie on the Cytoplasmic side of the membrane. Residues 253-273 (IYYNISITALSVFIALFIGLI) form a helical membrane-spanning segment. At 274–302 (ELFQVVSEKLHLKFENRLLRALQSLEFTD) the chain is on the periplasmic side. The helical transmembrane segment at 303-322 (LGYYLVGLFVIAFLGSFFLW) threads the bilayer. The Cytoplasmic segment spans residues 323–331 (KIKFSKLES).

Belongs to the NiCoT transporter (TC 2.A.52) family.

It is found in the cell inner membrane. In terms of biological role, high-affinity nickel intake protein. Imports nickel ions in an energy-dependent fashion. Necessary for the expression of catalytically active urease. The sequence is that of High-affinity nickel-transport protein NixA (nixA) from Helicobacter pylori (strain ATCC 700392 / 26695) (Campylobacter pylori).